The sequence spans 964 residues: Siderophore exporter MmpL5 (964 aa).

12 helical membrane-spanning segments follow: residues 31–51, 203–223, 230–250, 255–275, 302–322, 340–360, 389–409, 773–793, 803–823, 826–846, 880–900, and 923–943; these read FAVPIILGWLVTIAVLNVTVP, SLQVIEAVTFTVIIVMLLLVY, AIMLTMVVLGLLATRGGVAFL, IIGLSTFATNLLVVLAIAAAT, MFGGTAHVVLGSGLTIAGATF, AIGMVIVVAAALTLGPAIIAV, WPGPILVGAVALALVGLLTLP, TYDLMIAGISALCLIFIIMLI, VIVGTVVLSLGASFGLSVLIW, ILGIELHWLVLAMAVIILLAV, VVTAAGLVFAFTMMSFAVSEL, and SFMTPSIAALLGKWFWWPQVV.

The protein belongs to the resistance-nodulation-cell division (RND) (TC 2.A.6) family. MmpL subfamily. As to quaternary structure, interacts with MmpS5.

The protein resides in the cell inner membrane. Its function is as follows. Part of an export system, which is required for biosynthesis and secretion of siderophores. This chain is Siderophore exporter MmpL5 (mmpL5), found in Mycobacterium tuberculosis (strain CDC 1551 / Oshkosh).